Here is a 227-residue protein sequence, read N- to C-terminus: Cytochrome c oxidase subunit 2 (227 aa).

Over 1-14 (MAYPFQLGLQDATS) the chain is Mitochondrial intermembrane. The chain crosses the membrane as a helical span at residues 15-45 (PIMEELMNFHDHTLMIVFLISSLVLYIISLM). Residues 46–59 (LTTKLTHTSTMDAQ) lie on the Mitochondrial matrix side of the membrane. The helical transmembrane segment at 60-87 (EVETIWTILPAAILILIALPSLRILYMM) threads the bilayer. The Mitochondrial intermembrane segment spans residues 88–227 (DEINNPVLTV…YFENWSASMI (140 aa)). Residues histidine 161, cysteine 196, glutamate 198, cysteine 200, histidine 204, and methionine 207 each contribute to the Cu cation site. Residue glutamate 198 coordinates Mg(2+).

This sequence belongs to the cytochrome c oxidase subunit 2 family. As to quaternary structure, component of the cytochrome c oxidase (complex IV, CIV), a multisubunit enzyme composed of 14 subunits. The complex is composed of a catalytic core of 3 subunits MT-CO1, MT-CO2 and MT-CO3, encoded in the mitochondrial DNA, and 11 supernumerary subunits COX4I, COX5A, COX5B, COX6A, COX6B, COX6C, COX7A, COX7B, COX7C, COX8 and NDUFA4, which are encoded in the nuclear genome. The complex exists as a monomer or a dimer and forms supercomplexes (SCs) in the inner mitochondrial membrane with NADH-ubiquinone oxidoreductase (complex I, CI) and ubiquinol-cytochrome c oxidoreductase (cytochrome b-c1 complex, complex III, CIII), resulting in different assemblies (supercomplex SCI(1)III(2)IV(1) and megacomplex MCI(2)III(2)IV(2)). Found in a complex with TMEM177, COA6, COX18, COX20, SCO1 and SCO2. Interacts with TMEM177 in a COX20-dependent manner. Interacts with COX20. Interacts with COX16. It depends on Cu cation as a cofactor.

The protein localises to the mitochondrion inner membrane. It catalyses the reaction 4 Fe(II)-[cytochrome c] + O2 + 8 H(+)(in) = 4 Fe(III)-[cytochrome c] + 2 H2O + 4 H(+)(out). Its function is as follows. Component of the cytochrome c oxidase, the last enzyme in the mitochondrial electron transport chain which drives oxidative phosphorylation. The respiratory chain contains 3 multisubunit complexes succinate dehydrogenase (complex II, CII), ubiquinol-cytochrome c oxidoreductase (cytochrome b-c1 complex, complex III, CIII) and cytochrome c oxidase (complex IV, CIV), that cooperate to transfer electrons derived from NADH and succinate to molecular oxygen, creating an electrochemical gradient over the inner membrane that drives transmembrane transport and the ATP synthase. Cytochrome c oxidase is the component of the respiratory chain that catalyzes the reduction of oxygen to water. Electrons originating from reduced cytochrome c in the intermembrane space (IMS) are transferred via the dinuclear copper A center (CU(A)) of subunit 2 and heme A of subunit 1 to the active site in subunit 1, a binuclear center (BNC) formed by heme A3 and copper B (CU(B)). The BNC reduces molecular oxygen to 2 water molecules using 4 electrons from cytochrome c in the IMS and 4 protons from the mitochondrial matrix. The sequence is that of Cytochrome c oxidase subunit 2 (MT-CO2) from Leggadina forresti (Forrest's mouse).